A 299-amino-acid polypeptide reads, in one-letter code: B3 domain-containing transcription factor NGA2 (299 aa).

A disordered region spans residues 1-21 (MNQEDKEKPIEEASSSMEREH). The segment at residues 23–129 (FDKVVTPSDV…KLYIDWRRRP (107 aa)) is a DNA-binding region (TF-B3). A disordered region spans residues 226–249 (GGGGSVNSTEEESSSSGGSIPRGR).

The protein localises to the nucleus. Regulates lateral organ growth. Functionally redundant with NGA1, NGA3 and NGA4. The protein is B3 domain-containing transcription factor NGA2 (NGA2) of Arabidopsis thaliana (Mouse-ear cress).